The following is an 805-amino-acid chain: Phenylalanine--tRNA ligase beta subunit (805 aa).

A tRNA-binding domain is found at 39 to 148; sequence APPFTGVVVT…AALRPGTDIR (110 aa). One can recognise a B5 domain in the interval 399–474; the sequence is PVREPVRMRL…RVYGFERIPD (76 aa). 4 residues coordinate Mg(2+): Asp452, Asp458, Glu461, and Glu462. In terms of domain architecture, FDX-ACB spans 703 to 804; that stretch reads SRQPVVVRDL…LVAAHNARQR (102 aa).

Belongs to the phenylalanyl-tRNA synthetase beta subunit family. Type 1 subfamily. In terms of assembly, tetramer of two alpha and two beta subunits. Mg(2+) serves as cofactor.

The protein resides in the cytoplasm. It carries out the reaction tRNA(Phe) + L-phenylalanine + ATP = L-phenylalanyl-tRNA(Phe) + AMP + diphosphate + H(+). This Bordetella pertussis (strain Tohama I / ATCC BAA-589 / NCTC 13251) protein is Phenylalanine--tRNA ligase beta subunit.